The sequence spans 175 residues: O-acetyl-ADP-ribose deacetylase (175 aa).

The Macro domain occupies M1–P175. Substrate is bound by residues D11–I12, N25, G33–D35, and S122–Y126. D35 serves as the catalytic Proton acceptor.

It belongs to the MacroD-type family. YmdB subfamily. In terms of assembly, homodimer. Interacts with RNase III.

The enzyme catalyses 3''-O-acetyl-ADP-D-ribose + H2O = ADP-D-ribose + acetate + H(+). The catalysed reaction is 2''-O-acetyl-ADP-D-ribose + H2O = ADP-D-ribose + acetate + H(+). Deacetylates O-acetyl-ADP ribose to yield ADP-ribose and free acetate. Down-regulates ribonuclease 3 (RNase III) activity. Acts by interacting directly with the region of the ribonuclease that is required for dimerization/activation. The protein is O-acetyl-ADP-ribose deacetylase of Klebsiella pneumoniae (strain 342).